A 245-amino-acid chain; its full sequence is Thymidylate kinase (245 aa).

Residue 55–62 coordinates ATP; it reads GIDGVGKS.

The protein belongs to the thymidylate kinase family.

The catalysed reaction is dTMP + ATP = dTDP + ADP. Phosphorylation of dTMP to form dTDP in both de novo and salvage pathways of dTTP synthesis. In Rhodopirellula baltica (strain DSM 10527 / NCIMB 13988 / SH1), this protein is Thymidylate kinase.